A 293-amino-acid chain; its full sequence is Probable mediator of RNA polymerase II transcription subunit 15b (293 aa).

This sequence belongs to the plant Mediator complex subunit 15 family. As to quaternary structure, component of the Mediator complex.

It is found in the nucleus. Component of the Mediator complex, a coactivator involved in the regulated transcription of nearly all RNA polymerase II-dependent genes. Mediator functions as a bridge to convey information from gene-specific regulatory proteins to the basal RNA polymerase II transcription machinery. The Mediator complex, having a compact conformation in its free form, is recruited to promoters by direct interactions with regulatory proteins and serves for the assembly of a functional preinitiation complex with RNA polymerase II and the general transcription factors. This is Probable mediator of RNA polymerase II transcription subunit 15b (MED15B) from Arabidopsis thaliana (Mouse-ear cress).